We begin with the raw amino-acid sequence, 162 residues long: Lipoprotein signal peptidase (162 aa).

3 helical membrane passes run 12–32, 70–90, and 102–122; these read WLWL…LILQ, WFFA…MYRS, and ALII…GFVV. Catalysis depends on residues D123 and D141. A helical transmembrane segment spans residues 137-157; that stretch reads FNLADSAICIGAALIVLEGFL.

It belongs to the peptidase A8 family.

The protein localises to the cell inner membrane. It carries out the reaction Release of signal peptides from bacterial membrane prolipoproteins. Hydrolyzes -Xaa-Yaa-Zaa-|-(S,diacylglyceryl)Cys-, in which Xaa is hydrophobic (preferably Leu), and Yaa (Ala or Ser) and Zaa (Gly or Ala) have small, neutral side chains.. Its pathway is protein modification; lipoprotein biosynthesis (signal peptide cleavage). Its function is as follows. This protein specifically catalyzes the removal of signal peptides from prolipoproteins. The protein is Lipoprotein signal peptidase of Citrobacter koseri (strain ATCC BAA-895 / CDC 4225-83 / SGSC4696).